Here is a 391-residue protein sequence, read N- to C-terminus: UPF0229 protein BCB4264_A0587 (391 aa).

Residues 1-16 are compositionally biased toward polar residues; sequence MGEENQPNYTISQENW. Disordered stretches follow at residues 1-31 and 80-117; these read MGEE…RHQE and HVGQ…GDAA. Positions 21–31 are enriched in basic and acidic residues; sequence KGYDDQQRHQE. Residues 98–115 show a composition bias toward gly residues; sequence GSGGQKQKGPGKGQGAGD.

This sequence belongs to the UPF0229 family.

The sequence is that of UPF0229 protein BCB4264_A0587 from Bacillus cereus (strain B4264).